Reading from the N-terminus, the 427-residue chain is MDNESILITGPEILDAGGIRRGSVLIEDNRIADVSNTLSPGDADTVIDGTGKLLIPGLVNTHTHLSMTLFRGIADDLPLDRWLNDHIWPAEARLNGDYCYAGALLGCIEMIRSGTTSFNDMYFYMDHVARAVEEAGLRCVISHGMIDLGDTEKMTAELRESRRIIKECHGMADDRIRVALGPHSPYTCSEELLKETAALADKNDLMIHIHVSETENEVSEVSRSHGMTPVEYLDEVGVLGPRTVAAHCVWLKDWEIDVLAERDVKVSHNPSSNMKLASGVSPVARLLQRGVNVSLGTDGAASNNNLDMFQEMKTASLLQKVNLEDPTALPAMDVFSMATLNGARALGIDAGLIAPGKLADIVILNTRRPHLTPWRNPPSHTVYSASGADVDTVICDGRILLRDGELEVLEEKYVMELAEAAAAELTG.

2 residues coordinate Zn(2+): His-62 and His-64. Residues Glu-91 and His-183 each coordinate substrate. Residue His-210 participates in Zn(2+) binding. Substrate is bound by residues Glu-213 and Asp-298. Asp-298 lines the Zn(2+) pocket.

This sequence belongs to the metallo-dependent hydrolases superfamily. MTA/SAH deaminase family. Homotetramer. The cofactor is Zn(2+).

The enzyme catalyses 5'-deoxyadenosine + H2O + H(+) = 5'-deoxyinosine + NH4(+). It carries out the reaction S-adenosyl-L-homocysteine + H2O + H(+) = S-inosyl-L-homocysteine + NH4(+). The catalysed reaction is S-methyl-5'-thioadenosine + H2O + H(+) = S-methyl-5'-thioinosine + NH4(+). It catalyses the reaction adenosine + H2O + H(+) = inosine + NH4(+). Its pathway is amino-acid biosynthesis; S-adenosyl-L-methionine biosynthesis. Catalyzes the deamination of three SAM-derived enzymatic products, namely 5'-deoxyadenosine, S-adenosyl-L-homocysteine, and 5'-methylthioadenosine, to produce the inosine analogs. Can also deaminate adenosine. The preferred substrate for this enzyme is 5'-deoxyadenosine, but all these substrates are efficiently deaminated. Likely functions in a S-adenosyl-L-methionine (SAM) recycling pathway from S-adenosyl-L-homocysteine (SAH) produced from SAM-dependent methylation reactions. May also be involved in the recycling of 5'-deoxyadenosine, whereupon the 5'-deoxyribose moiety of 5'-deoxyinosine is further metabolized to deoxyhexoses used for the biosynthesis of aromatic amino acids in methanogens. This is 5'-deoxyadenosine deaminase from Methanothermobacter thermautotrophicus (strain ATCC 29096 / DSM 1053 / JCM 10044 / NBRC 100330 / Delta H) (Methanobacterium thermoautotrophicum).